A 340-amino-acid chain; its full sequence is 4-hydroxy-2-oxovalerate aldolase (340 aa).

In terms of domain architecture, Pyruvate carboxyltransferase spans Val-8 to Met-260. Residue Arg-16–Asp-17 coordinates substrate. Asp-17 provides a ligand contact to Mn(2+). His-20 functions as the Proton acceptor in the catalytic mechanism. Substrate contacts are provided by Ser-170 and His-199. Residues His-199 and His-201 each coordinate Mn(2+). Position 290 (Tyr-290) interacts with substrate.

It belongs to the 4-hydroxy-2-oxovalerate aldolase family.

It carries out the reaction (S)-4-hydroxy-2-oxopentanoate = acetaldehyde + pyruvate. The chain is 4-hydroxy-2-oxovalerate aldolase from Shewanella pealeana (strain ATCC 700345 / ANG-SQ1).